Here is a 448-residue protein sequence, read N- to C-terminus: Cysteine--tRNA ligase (448 aa).

Residue Cys27 participates in Zn(2+) binding. Residues 29–39 (PTVYNYIHVGN) carry the 'HIGH' region motif. Zn(2+) contacts are provided by Cys210, His235, and Glu239. The short motif at 267–271 (KMSKS) is the 'KMSKS' region element. Residue Lys270 coordinates ATP.

The protein belongs to the class-I aminoacyl-tRNA synthetase family. Monomer. The cofactor is Zn(2+).

Its subcellular location is the cytoplasm. The catalysed reaction is tRNA(Cys) + L-cysteine + ATP = L-cysteinyl-tRNA(Cys) + AMP + diphosphate. The protein is Cysteine--tRNA ligase of Lactococcus lactis subsp. cremoris (strain MG1363).